Consider the following 53-residue polypeptide: ATP synthase protein 8 (53 aa).

Residues 6-26 form a helical membrane-spanning segment; sequence PIGWLSLFIIFSLTFILFSMM.

Belongs to the ATPase protein 8 family. F-type ATPases have 2 components, CF(1) - the catalytic core - and CF(0) - the membrane proton channel.

It is found in the mitochondrion membrane. Functionally, mitochondrial membrane ATP synthase (F(1)F(0) ATP synthase or Complex V) produces ATP from ADP in the presence of a proton gradient across the membrane which is generated by electron transport complexes of the respiratory chain. F-type ATPases consist of two structural domains, F(1) - containing the extramembraneous catalytic core and F(0) - containing the membrane proton channel, linked together by a central stalk and a peripheral stalk. During catalysis, ATP synthesis in the catalytic domain of F(1) is coupled via a rotary mechanism of the central stalk subunits to proton translocation. Part of the complex F(0) domain. Minor subunit located with subunit a in the membrane. The protein is ATP synthase protein 8 (mt:ATPase8) of Ceratitis capitata (Mediterranean fruit fly).